The chain runs to 392 residues: Formate-dependent phosphoribosylglycinamide formyltransferase (392 aa).

N(1)-(5-phospho-beta-D-ribosyl)glycinamide-binding positions include 12–13 (EL) and E72. ATP-binding positions include R104, K145, 150 to 155 (SSGKGQ), 185 to 188 (EAFV), and E193. Residues 109-300 (DLAARDLGLR…EFELHARAVL (192 aa)) form the ATP-grasp domain. Positions 258 and 270 each coordinate Mg(2+). N(1)-(5-phospho-beta-D-ribosyl)glycinamide-binding positions include D277, K348, and 355-356 (RR).

The protein belongs to the PurK/PurT family. In terms of assembly, homodimer.

The catalysed reaction is N(1)-(5-phospho-beta-D-ribosyl)glycinamide + formate + ATP = N(2)-formyl-N(1)-(5-phospho-beta-D-ribosyl)glycinamide + ADP + phosphate + H(+). Its pathway is purine metabolism; IMP biosynthesis via de novo pathway; N(2)-formyl-N(1)-(5-phospho-D-ribosyl)glycinamide from N(1)-(5-phospho-D-ribosyl)glycinamide (formate route): step 1/1. In terms of biological role, involved in the de novo purine biosynthesis. Catalyzes the transfer of formate to 5-phospho-ribosyl-glycinamide (GAR), producing 5-phospho-ribosyl-N-formylglycinamide (FGAR). Formate is provided by PurU via hydrolysis of 10-formyl-tetrahydrofolate. In Chlorobaculum tepidum (strain ATCC 49652 / DSM 12025 / NBRC 103806 / TLS) (Chlorobium tepidum), this protein is Formate-dependent phosphoribosylglycinamide formyltransferase.